A 350-amino-acid chain; its full sequence is Ketol-acid reductoisomerase (NADP(+)) (350 aa).

One can recognise a KARI N-terminal Rossmann domain in the interval 4–187; sequence VSITTDYSRM…GGARANIIKT (184 aa). NADP(+)-binding positions include 30-33, Arg-53, Thr-58, and 88-91; these read YGSQ and DMVQ. Residue His-113 is part of the active site. Gly-139 contributes to the NADP(+) binding site. The region spanning 188–333 is the KARI C-terminal knotted domain; the sequence is TFKEETETDL…KQLRAKMVWL (146 aa). Positions 196, 200, 232, and 236 each coordinate Mg(2+). Residue Ser-257 coordinates substrate.

It belongs to the ketol-acid reductoisomerase family. Requires Mg(2+) as cofactor.

The enzyme catalyses (2R)-2,3-dihydroxy-3-methylbutanoate + NADP(+) = (2S)-2-acetolactate + NADPH + H(+). It carries out the reaction (2R,3R)-2,3-dihydroxy-3-methylpentanoate + NADP(+) = (S)-2-ethyl-2-hydroxy-3-oxobutanoate + NADPH + H(+). Its pathway is amino-acid biosynthesis; L-isoleucine biosynthesis; L-isoleucine from 2-oxobutanoate: step 2/4. It participates in amino-acid biosynthesis; L-valine biosynthesis; L-valine from pyruvate: step 2/4. In terms of biological role, involved in the biosynthesis of branched-chain amino acids (BCAA). Catalyzes an alkyl-migration followed by a ketol-acid reduction of (S)-2-acetolactate (S2AL) to yield (R)-2,3-dihydroxy-isovalerate. In the isomerase reaction, S2AL is rearranged via a Mg-dependent methyl migration to produce 3-hydroxy-3-methyl-2-ketobutyrate (HMKB). In the reductase reaction, this 2-ketoacid undergoes a metal-dependent reduction by NADPH to yield (R)-2,3-dihydroxy-isovalerate. This is Ketol-acid reductoisomerase (NADP(+)) from Xylella fastidiosa (strain Temecula1 / ATCC 700964).